The chain runs to 341 residues: Probable alcohol acetyltransferase (341 aa).

The N-terminal 40 residues, 1-40 (MFASRILRNSAQTLKTELPHKETIKMAYDLHKPRSTAIRH), are a transit peptide targeting the mitochondrion. An AB hydrolase-1 domain is found at 48 to 301 (PILFLHGIFG…NSNHDILDQR (254 aa)). Residues Ser121, Asp145, and His295 each act as charge relay system in the active site.

Belongs to the AB hydrolase superfamily.

Its subcellular location is the mitochondrion. Probable alcohol acetyltransferase that uses acetyl-CoA to synthesize acetate esters from various alcohols. Not involved in the synthesis of ethyl acetate. The sequence is that of Probable alcohol acetyltransferase (EAT2) from Wickerhamomyces anomalus (strain ATCC 58044 / CBS 1984 / NCYC 433 / NRRL Y-366-8) (Yeast).